A 294-amino-acid polypeptide reads, in one-letter code: Elongation factor Ts (294 aa).

Positions 80 to 83 (TDFV) are involved in Mg(2+) ion dislocation from EF-Tu.

It belongs to the EF-Ts family.

It localises to the cytoplasm. In terms of biological role, associates with the EF-Tu.GDP complex and induces the exchange of GDP to GTP. It remains bound to the aminoacyl-tRNA.EF-Tu.GTP complex up to the GTP hydrolysis stage on the ribosome. The polypeptide is Elongation factor Ts (Listeria monocytogenes serovar 1/2a (strain ATCC BAA-679 / EGD-e)).